We begin with the raw amino-acid sequence, 578 residues long: Forkhead box protein P1 (578 aa).

Residues 208 to 233 form a C2H2-type zinc finger; sequence GVCKWPGCETICEDFPSFLKHLNSEH. A leucine-zipper region spans residues 250-271; it reads VQQLELQLSKDKERLQAMMSHL. The interval 284 to 288 is ctbp1-binding; that stretch reads PLNLV. Polar residues predominate over residues 293–305; it reads LSKTASEASPQSL. The segment at 293–325 is disordered; the sequence is LSKTASEASPQSLPHTPTTPTAPLTPITQGPSV. The span at 306 to 320 shows a compositional bias: low complexity; the sequence is PHTPTTPTAPLTPIT. Residues 366-456 constitute a DNA-binding region (fork-head); sequence RPPFTYASLI…PQKISGSPTL (91 aa). Residues 511–578 form a disordered region; it reads MEHTSSNGSD…EDDPVNDDME (68 aa). Low complexity predominate over residues 515 to 527; it reads SSNGSDSSPGRSP. Over residues 568 to 578 the composition is skewed to acidic residues; the sequence is YEDDPVNDDME.

In terms of assembly, dimerization is required for DNA-binding. Isoform a, but not isoform b, interacts with ctbp1. In terms of tissue distribution, all isoforms show similar spatial expression. Localized to the animal hemisphere of early cleavage stage embryos. At tailbud stages, expressed in regions of the brain, eye and the splanchnic mesodermal layer of the lateral plate mesoderm surrounding the gut. At stage 35, expressed within the lens of the eye, in distinct regions of the head mesenchyme and in the area anterior to the gut. In the brain the anterior-most expression is restricted to the outer region of the mesencephalon. With ongoing development, additional expression is found in the curling gut.

The protein localises to the nucleus. In terms of biological role, transcriptional repressor. The sequence is that of Forkhead box protein P1 from Xenopus laevis (African clawed frog).